We begin with the raw amino-acid sequence, 182 residues long: Ribosome-recycling factor (182 aa).

It belongs to the RRF family.

It is found in the cytoplasm. Responsible for the release of ribosomes from messenger RNA at the termination of protein biosynthesis. May increase the efficiency of translation by recycling ribosomes from one round of translation to another. This chain is Ribosome-recycling factor, found in Prochlorococcus marinus (strain MIT 9313).